Reading from the N-terminus, the 208-residue chain is Small ribosomal subunit protein uS2 (208 aa).

It belongs to the universal ribosomal protein uS2 family.

This is Small ribosomal subunit protein uS2 from Pyrobaculum calidifontis (strain DSM 21063 / JCM 11548 / VA1).